A 401-amino-acid polypeptide reads, in one-letter code: Argininosuccinate synthase (401 aa).

Position 8–16 (8–16) interacts with ATP; it reads AYSGGLDTS. An L-citrulline-binding site is contributed by tyrosine 87. Glycine 117 serves as a coordination point for ATP. Threonine 119, asparagine 123, and aspartate 124 together coordinate L-aspartate. Asparagine 123 lines the L-citrulline pocket. Residues arginine 127, serine 175, glutamate 259, and tyrosine 271 each contribute to the L-citrulline site.

This sequence belongs to the argininosuccinate synthase family. Type 1 subfamily. As to quaternary structure, homotetramer.

It is found in the cytoplasm. The enzyme catalyses L-citrulline + L-aspartate + ATP = 2-(N(omega)-L-arginino)succinate + AMP + diphosphate + H(+). It functions in the pathway amino-acid biosynthesis; L-arginine biosynthesis; L-arginine from L-ornithine and carbamoyl phosphate: step 2/3. This Paenarthrobacter aurescens (strain TC1) protein is Argininosuccinate synthase.